The following is a 3011-amino-acid chain: Genome polyprotein (3011 aa).

Serine 2 is subject to N-acetylserine; by host. The tract at residues 2–23 is interaction with STAT1; the sequence is STNPKPQRKTKRNTNRRPQDVK. The segment at 2 to 58 is interaction with EIF2AK2/PKR; it reads STNPKPQRKTKRNTNRRPQDVKFPGGGQIVGGVYLLPRRGPRVGVRATRKTSERSQP. Residues 2-59 are interaction with DDX3X; sequence STNPKPQRKTKRNTNRRPQDVKFPGGGQIVGGVYLLPRRGPRVGVRATRKTSERSQPR. The segment at 2–75 is disordered; that stretch reads STNPKPQRKT…PKARRPEGRS (74 aa). Topologically, residues 2 to 168 are cytoplasmic; sequence STNPKPQRKT…EDGVNYATGN (167 aa). Short sequence motifs (nuclear localization signal) lie at residues 5 to 13 and 38 to 43; these read PKPQRKTKR and PRRGPR. The span at 7-16 shows a compositional bias: basic residues; it reads PQRKTKRNTN. Phosphoserine; by host is present on serine 53. Short sequence motifs (nuclear localization signal) lie at residues 58–64 and 66–71; these read PRGRRQP and PKARRP. Positions 58 to 68 are enriched in basic residues; it reads PRGRRQPIPKA. A Phosphoserine; by host modification is found at serine 99. Residues 112–152 are important for endoplasmic reticulum and mitochondrial localization; it reads PRRRSRNLGKVIDTLTCGFADLMGYIPLVGAPLGGAARALA. A Phosphoserine; by host PKA modification is found at serine 116. The tract at residues 122–173 is interaction with APOA2; the sequence is VIDTLTCGFADLMGYIPLVGAPLGGAARALAHGVRVLEDGVNYATGNLPGCS. The important for lipid droplets localization stretch occupies residues 164 to 167; sequence YATG. A helical membrane pass occupies residues 169–189; it reads LPGCSFSIFLLALLSCLTVPA. Residues 178–191 constitute a propeptide, ER anchor for the core protein, removed in mature form by host signal peptidase; that stretch reads LLALLSCLTVPASA. Topologically, residues 190 to 358 are lumenal; that stretch reads SAVGVRNSSG…AGAHWGVLAG (169 aa). Asparagine 196, asparagine 209, and asparagine 234 each carry an N-linked (GlcNAc...) asparagine; by host glycan. Positions 265 to 296 are important for fusion; sequence IVGAAAFCSAMYVGDLCGSIFLVGQIFTFSPR. N-linked (GlcNAc...) asparagine; by host glycosylation occurs at asparagine 305. A helical transmembrane segment spans residues 359 to 379; sequence LAYYSMVGNWAKVVVVLLLFA. Residues 380 to 725 are Lumenal-facing; the sequence is GVDAETRVTG…WEYVVLLFLL (346 aa). The segment at 385-411 is HVR1; the sequence is TRVTGGAAGHTAFGFASFLAPGAKQKI. N-linked (GlcNAc...) (high mannose) asparagine; by host glycosylation is found at asparagine 417, asparagine 423, asparagine 430, and asparagine 448. 4 disulfide bridges follow: cysteine 429/cysteine 552, cysteine 452/cysteine 459, cysteine 486/cysteine 494, and cysteine 503/cysteine 508. The tract at residues 474 to 479 is HVR2; sequence HEGNAS. The CD81-binding 1 stretch occupies residues 480–493; the sequence is DDQRPYCWHYALRP. Asparagine 532 is a glycosylation site (N-linked (GlcNAc...) (high mannose) asparagine; by host). N-linked (GlcNAc...) asparagine; by host glycosylation is present at asparagine 540. Residues 544-551 are CD81-binding 2; the sequence is PPMGNWFG. Asparagine 556 carries N-linked (GlcNAc...) (high mannose) asparagine; by host glycosylation. Cysteine 564 and cysteine 569 are oxidised to a cystine. N-linked (GlcNAc...) (high mannose) asparagine; by host glycosylation occurs at asparagine 576. Disulfide bonds link cysteine 581-cysteine 585, cysteine 597-cysteine 620, and cysteine 607-cysteine 644. 2 N-linked (GlcNAc...) (high mannose) asparagine; by host glycosylation sites follow: asparagine 623 and asparagine 645. Cysteine 652 and cysteine 677 are disulfide-bonded. The PKR/eIF2-alpha phosphorylation homology domain (PePHD) stretch occupies residues 660-671; it reads AELSPLLLSTTQ. A helical transmembrane segment spans residues 726–746; it reads LADARICACLWMMLLISQVEA. Residues 747–757 lie on the Lumenal side of the membrane; it reads ALENLIVLNAA. Residues 758–778 traverse the membrane as a helical segment; it reads SLVGTHGIVPFFIFFCAAWYL. The Cytoplasmic segment spans residues 779–781; that stretch reads KGK. The chain crosses the membrane as a helical span at residues 782–803; the sequence is WAPGLAYSVYGMWPLLLLLLAL. Topologically, residues 804–813 are lumenal; that stretch reads PQRAYALDQE. The chain crosses the membrane as a helical span at residues 814 to 834; the sequence is LAASCGATVFICLAVLTLSPY. Residues 835–838 lie on the Cytoplasmic side of the membrane; that stretch reads YKQY. A helical transmembrane segment spans residues 839–859; sequence MARGIWWLQYMLTRAEALLQV. The Lumenal portion of the chain corresponds to 860–881; it reads WVPPLNARGGRDGVVLLTCVLH. The chain crosses the membrane as a helical span at residues 882–902; that stretch reads PHLLFEITKIMLAILGPLWIL. The Peptidase C18 domain maps to 903-1026; sequence QASLLKVPYF…ALTDKGWRLL (124 aa). At 903–1657 the chain is on the cytoplasmic side; it reads QASLLKVPYF…CMSADLEVVT (755 aa). The tract at residues 904–1206 is protease NS2-3; that stretch reads ASLLKVPYFV…PVESLETTMR (303 aa). A lipid anchor (S-palmitoyl cysteine; by host) is attached at cysteine 922. The segment at 929-949 is interaction with host SCPS1; sequence AGGQYVQMALLKLGAFAGTYI. Residues histidine 952, glutamate 972, and cysteine 993 each act as for protease NS2 activity; shared with dimeric partner in the active site. The 182-residue stretch at 1027–1208 folds into the Peptidase S29 domain; that stretch reads APITAYAQQT…ESLETTMRSP (182 aa). Active-site charge relay system; for serine protease NS3 activity residues include histidine 1083 and aspartate 1107. 2 residues coordinate Zn(2+): cysteine 1123 and cysteine 1125. Serine 1165 functions as the Charge relay system; for serine protease NS3 activity in the catalytic mechanism. Residues cysteine 1171 and histidine 1175 each contribute to the Zn(2+) site. The region spanning 1217-1369 is the Helicase ATP-binding domain; the sequence is PTVPQSYQVA…SNIEEVALST (153 aa). ATP is bound at residue 1230–1237; it reads APTGSGKS. Positions 1237 and 1317 each coordinate Mg(2+). The short motif at 1316 to 1319 is the DECH box element; sequence DECH. Residues 1486–1497 are RNA-binding; that stretch reads QRRGRTGRGKHG. The chain crosses the membrane as a helical span at residues 1658–1678; the sequence is STWVLVGGVLAALAAYCLSTG. The tract at residues 1679 to 1690 is NS3-binding; sequence SVVIVGRIILSG. Residues 1679-1805 lie on the Cytoplasmic side of the membrane; that stretch reads SVVIVGRIIL…AVTSPLTTQQ (127 aa). The helical transmembrane segment at 1806 to 1824 threads the bilayer; that stretch reads TLLFNILGGWVAAQLAAPA. Residues 1825–1828 are Lumenal-facing; it reads AATA. A helical membrane pass occupies residues 1829–1849; it reads FVGAGITGAVIGSVGLGKVLV. A topological domain (cytoplasmic) is located at residue aspartate 1850. The helical transmembrane segment at 1851 to 1871 threads the bilayer; that stretch reads ILAGYGAGVAGALVAFKIMSG. The Lumenal segment spans residues 1872–1881; it reads EAPTAEDLVN. A helical membrane pass occupies residues 1882–1902; the sequence is LLPAILSPGALVVGVVCAAIL. Residues 1903–1972 lie on the Cytoplasmic side of the membrane; the sequence is RRHVGPGEGA…WISSDCTAPC (70 aa). S-palmitoyl cysteine; by host attachment occurs at residues cysteine 1968 and cysteine 1972. Residues 1973 to 2002 lie within the membrane without spanning it; the sequence is AGSWLKDVWDWICEVLSDFKSWLKAKLMPQ. Over 2003 to 2990 the chain is Cytoplasmic; that stretch reads LPGIPFVSCQ…YHSVSHVRPR (988 aa). The Zn(2+) site is built by cysteine 2011, cysteine 2029, cysteine 2031, and cysteine 2052. An FKBP8-binding region spans residues 2120–2208; it reads EFFTEVDGVR…ASSSASQLSA (89 aa). The transcriptional activation stretch occupies residues 2120–2332; it reads EFFTEVDGVR…PVPPPRRKRT (213 aa). An interaction with non-structural protein 4A region spans residues 2135-2139; the sequence is PPCKP. The interval 2189–2441 is interaction with host SKP2; it reads RLNRGSPPSL…TPCAAEETKL (253 aa). Position 2194 is a phosphoserine; by host; in p56 (serine 2194). Residues serine 2197, serine 2201, serine 2204, serine 2207, and serine 2210 each carry the phosphoserine; by host; in p58 modification. The ISDR stretch occupies residues 2210–2249; the sequence is SLKATCTTHHDSPDADLITANLLWRQEMGGNITRVESENK. Residues 2210-2275 form an interaction with EIF2AK2/PKR region; the sequence is SLKATCTTHH…REISVPAEIL (66 aa). Residues 2249–2306 form an NS4B-binding region; sequence KIVILDSFDPLVAEEDDREISVPAEILLKSKKFPPAMPIWARPDYNPPLVEPWKRPDY. Residues 2322–2325 carry the SH3-binding motif; it reads TPVP. A Nuclear localization signal motif is present at residues 2326–2334; it reads PPRRKRTVV. Lysine 2350 participates in a covalent cross-link: Glycyl lysine isopeptide (Lys-Gly) (interchain with G-Cter in ubiquitin). Over residues 2352–2373 the composition is skewed to low complexity; sequence FGSSTTSGVTSGEAAESSPAPS. The tract at residues 2352–2409 is disordered; sequence FGSSTTSGVTSGEAAESSPAPSCDGELDSEAESYSSMPPLEGEPGDPDLSDGSWSTVS. The tract at residues 2354–2377 is V3; that stretch reads SSTTSGVTSGEAAESSPAPSCDGE. Residues serine 2449 and serine 2462 each carry the phosphoserine; by host modification. The RdRp catalytic domain occupies 2634–2752; that stretch reads PMGFSYDTRC…ICESAGVQED (119 aa). The Mg(2+) site is built by aspartate 2640, aspartate 2738, and aspartate 2739. The helical transmembrane segment at 2991-3011 threads the bilayer; the sequence is WFFWCLLLLSVGVGIYLLPNR.

Belongs to the hepacivirus polyprotein family. As to quaternary structure, homooligomer. Interacts with E1 (via C-terminus). Interacts with the non-structural protein 5A. Interacts (via N-terminus) with host STAT1 (via SH2 domain); this interaction results in decreased STAT1 phosphorylation and ubiquitin-mediated proteasome-dependent STAT1 degradation, leading to decreased IFN-stimulated gene transcription. Interacts with host STAT3; this interaction constitutively activates STAT3. Interacts with host LTBR receptor. Interacts with host TNFRSF1A receptor and possibly induces apoptosis. Interacts with host HNRPK. Interacts with host YWHAE. Interacts with host UBE3A/E6AP. Interacts with host DDX3X. Interacts with host APOA2. Interacts with host RXRA protein. Interacts with host SP110 isoform 3/Sp110b; this interaction sequesters the transcriptional corepressor SP110 away from the nucleus. Interacts with host CREB3 nuclear transcription protein; this interaction triggers cell transformation. Interacts with host ACY3. Interacts with host C1QR1. Interacts with host RBM24; this interaction, which enhances the interaction of the mature core protein with 5'-UTR, may inhibit viral translation and favor replication. Interacts with host EIF2AK2/PKR; this interaction induces the autophosphorylation of EIF2AK2. Part of the viral assembly initiation complex composed of NS2, E1, E2, NS3, NS4A, NS5A and the mature core protein. In terms of assembly, forms a heterodimer with envelope glycoprotein E2. Interacts with mature core protein. Interacts with protease NS2. The heterodimer E1/E2 interacts with host CLDN1; this interaction plays a role in viral entry into host cell. Interacts with host SPSB2 (via C-terminus). Part of the viral assembly initiation complex composed of NS2, E1, E2, NS3, NS4A, NS5A and the mature core protein. Interacts with host NEURL3; this interaction prevents E1 binding to glycoprotein E2. Forms a heterodimer with envelope glycoprotein E1. Interacts with host CD81 and SCARB1 receptors; these interactions play a role in viral entry into host cell. Interacts with host EIF2AK2/PKR; this interaction inhibits EIF2AK2 and probably allows the virus to evade the innate immune response. Interacts with host CD209/DC-SIGN and CLEC4M/DC-SIGNR. Interact with host SPCS1; this interaction is essential for viral particle assembly. Interacts with protease NS2. The heterodimer E1/E2 interacts with host CLDN1; this interaction plays a role in viral entry into host cell. Part of the viral assembly initiation complex composed of NS2, E1, E2, NS3, NS4A, NS5A and the mature core protein. Interacts with host SLC3A2/4F2hc; the interaction may facilitate viral entry into host cell. Interacts with human PLSCR1. As to quaternary structure, homohexamer. Homoheptamer. Interacts with protease NS2. In terms of assembly, homodimer. Interacts with host SPCS1; this interaction is essential for viral particle assembly. Interacts with envelope glycoprotein E1. Interacts with envelope glycoprotein E2. Interacts with viroporin p7. Interacts with serine protease/helicase NS3. Part of the replication complex composed of NS2, NS3, NS4A, NS4B, NS5A and the RNA-directed RNA polymerase embedded in an ER-derived membranous web. Part of the viral assembly initiation complex composed of NS2, E1, E2, NS3, NS4A, NS5A and the mature core protein. Interacts with protease NS2. Interacts with non-structural protein 4A; this interaction stabilizes the folding of NS3 serine protease. NS3-NS4A interaction is essential for NS3 activation and allows membrane anchorage of the latter. NS3/NS4A complex also prevents phosphorylation of host IRF3, thus preventing the establishment of dsRNA induced antiviral state. Interacts with host MAVS; this interaction leads to the cleavage and inhibition of host MAVS. Interacts with host TICAM1; this interaction leads to the cleavage and inhibition of host TICAM1. Interacts with host TANK-binding kinase/TBK1; this interaction results in the inhibition of the association between TBK1 and IRF3, which leads to the inhibition of IRF3 activation. Interacts with host RBM24. Part of the replication complex composed of NS2, NS3, NS4A, NS4B, NS5A and the RNA-directed RNA polymerase embedded in an ER-derived membranous web. Part of the viral assembly initiation complex composed of NS2, E1, E2, NS3, NS4A, NS5A and the mature core protein. As to quaternary structure, interacts with NS3 serine protease; this interaction stabilizes the folding of NS3 serine protease. NS3-NS4A interaction is essential for NS3 activation and allows membrane anchorage of the latter. Interacts with non-structural protein 5A (via N-terminus). Part of the replication complex composed of NS2, NS3, NS4A, NS4B, NS5A and the RNA-directed RNA polymerase embedded in an ER-derived membranous web. Part of the viral assembly initiation complex composed of NS2, E1, E2, NS3, NS4A, NS5A and the mature core protein. In terms of assembly, homomultimer. Interacts with non-structural protein NS5A. Interacts with host PLA2G4C; this interaction likely initiates the recruitment of replication complexes to lipid droplets. Interacts with host STING; this interaction disrupts the interaction between STING and TBK1 thereby suppressing the interferon signaling. Part of the replication complex composed of NS2, NS3, NS4A, NS4B, NS5A and the RNA-directed RNA polymerase embedded in an ER-derived membranous web. Monomer. Homodimer; dimerization is required for RNA-binding. Interacts with the mature core protein. Interacts (via N-terminus) with non-structural protein 4A. Interacts with non-structural protein 4B. Interacts (via region D2) with RNA-directed RNA polymerase. Part of the viral assembly initiation complex composed of NS2, E1, E2, NS3, NS4A, NS5A and the mature core protein. Part of the replication complex composed of NS2, NS3, NS4A, NS4B, NS5A and the RNA-directed RNA polymerase embedded in an ER-derived membranous web. Interacts with host GRB2. Interacts with host BIN1. Interacts with host PIK3R1. Interacts with host SRCAP. Interacts with host FKBP8. Interacts (via C-terminus) with host VAPB (via MSP domain). Interacts with host EIF2AK2/PKR; this interaction leads to disruption of EIF2AK2 dimerization by NS5A and probably allows the virus to evade the innate immune response. Interacts (via N-terminus) with host PACSIN2 (via N-terminus); this interaction attenuates protein kinase C alpha-mediated phosphorylation of PACSIN2 by disrupting the interaction between PACSIN2 and PRKCA. Interacts (via N-terminus) with host SRC kinase (via SH2 domain). Interacts with most Src-family kinases. Interacts with host IFI27 and SKP2; promotes the ubiquitin-mediated proteasomal degradation of NS5A. Interacts with host GPS2. Interacts with host TNFRSF21; this interaction allows the modulation by the virus of JNK, p38 MAPK, STAT3, and Akt signaling pathways in a DR6-dependent manner. Interacts (via N-terminus) with host CIDEB (via N-terminus); this interaction seems to regulate the association of HCV particles with APOE. Interacts with host CHKA/Choline Kinase-alpha; CHKA bridges host PI4KA and NS5A and potentiates NS5A-stimulated PI4KA activity, which then facilitates the targeting of the ternary complex to the ER for viral replication. Interacts with host SPSB2 (via C-terminus); this interaction targets NS5A for ubiquitination and degradation. Interacts with host RAB18; this interaction may promote the association of NS5A and other replicase components with lipid droplets. Interacts (via region D2) with host PPIA/CYPA; the interaction stimulates RNA-binding ability of NS5A and is dependent on the peptidyl-prolyl cis-trans isomerase activity of PPIA/CYPA. Interacts with host TRIM14; this interaction induces the degradation of NS5A. As to quaternary structure, homooligomer. Interacts with non-structural protein 5A. Interacts with host VAPB. Interacts with host PRK2/PKN2. Interacts with host HNRNPA1 and SEPT6; these interactions facilitate viral replication. Part of the replication complex composed of NS2, NS3, NS4A, NS4B, NS5A and the RNA-directed RNA polymerase. Zn(2+) serves as cofactor. The cofactor is Mg(2+). In terms of processing, specific enzymatic cleavages in vivo yield mature proteins. The structural proteins, core, E1, E2 and p7 are produced by proteolytic processing by host signal peptidases. The core protein precursor is synthesized as a 23 kDa, which is retained in the ER membrane through the hydrophobic signal peptide. Cleavage by the signal peptidase releases the 21 kDa mature core protein. The cleavage of the core protein precursor occurs between aminoacids 176 and 188 but the exact cleavage site is not known. Some degraded forms of the core protein appear as well during the course of infection. The other proteins (p7, NS2, NS3, NS4A, NS4B, NS5A and NS5B) are cleaved by the viral proteases. Autoprocessing between NS2 and NS3 is mediated by the NS2 cysteine protease catalytic domain and regulated by the NS3 N-terminal domain. Phosphorylated by host PKC and PKA. Post-translationally, ubiquitinated; mediated by UBE3A and leading to core protein subsequent proteasomal degradation. In terms of processing, highly N-glycosylated. Palmitoylation is required for NS2/3 autoprocessing and E2 recruitment to membranes. Post-translationally, palmitoylated. This modification may play a role in its polymerization or in protein-protein interactions. In terms of processing, phosphorylated on serines in a basal form termed p56. p58 is a hyperphosphorylated form of p56. p56 and p58 coexist in the cell in roughly equivalent amounts. Hyperphosphorylation is dependent on the presence of NS4A. Host CSNK1A1/CKI-alpha or RPS6KB1 kinases may be responsible for NS5A phosphorylation. Tyrosine phosphorylation is essential for the interaction with host SRC. Post-translationally, the N-terminus is phosphorylated by host PRK2/PKN2.

The protein localises to the host endoplasmic reticulum membrane. It is found in the host mitochondrion membrane. It localises to the virion. The protein resides in the host cytoplasm. Its subcellular location is the host nucleus. The protein localises to the host lipid droplet. It is found in the virion membrane. It localises to the host mitochondrion. The protein resides in the host cell membrane. Its subcellular location is the host perinuclear region. The catalysed reaction is Hydrolysis of four peptide bonds in the viral precursor polyprotein, commonly with Asp or Glu in the P6 position, Cys or Thr in P1 and Ser or Ala in P1'.. It carries out the reaction a ribonucleoside 5'-triphosphate + H2O = a ribonucleoside 5'-diphosphate + phosphate + H(+). It catalyses the reaction ATP + H2O = ADP + phosphate + H(+). The enzyme catalyses RNA(n) + a ribonucleoside 5'-triphosphate = RNA(n+1) + diphosphate. Inhibited by the antiviral drug hexamethylene amiloride. Inhibition by amantadine appears to be genotype-dependent. Also inhibited by long-alkyl-chain iminosugar derivatives. With respect to regulation, activity is up-regulated by PRK2/PKN2-mediated phosphorylation. Functionally, packages viral RNA to form a viral nucleocapsid, and promotes virion budding. Participates in the viral particle production as a result of its interaction with the non-structural protein 5A. Binds RNA and may function as a RNA chaperone to induce the RNA structural rearrangements taking place during virus replication. Modulates viral translation initiation by interacting with viral IRES and 40S ribosomal subunit. Affects various cell signaling pathways, host immunity and lipid metabolism. Prevents the establishment of cellular antiviral state by blocking the interferon-alpha/beta (IFN-alpha/beta) and IFN-gamma signaling pathways and by blocking the formation of phosphorylated STAT1 and promoting ubiquitin-mediated proteasome-dependent degradation of STAT1. Activates STAT3 leading to cellular transformation. Regulates the activity of cellular genes, including c-myc and c-fos. May repress the promoter of p53, and sequester CREB3 and SP110 isoform 3/Sp110b in the cytoplasm. Represses cell cycle negative regulating factor CDKN1A, thereby interrupting an important check point of normal cell cycle regulation. Targets transcription factors involved in the regulation of inflammatory responses and in the immune response: suppresses TNF-induced NF-kappa-B activation, and activates AP-1. Binds to dendritic cells (DCs) via C1QR1, resulting in down-regulation of T-lymphocytes proliferation. Alters lipid metabolism by interacting with hepatocellular proteins involved in lipid accumulation and storage. Induces up-regulation of FAS promoter activity, and thereby contributes to the increased triglyceride accumulation in hepatocytes (steatosis). Its function is as follows. Forms a heterodimer with envelope glycoprotein E2, which mediates virus attachment to the host cell, virion internalization through clathrin-dependent endocytosis and fusion with host membrane. Fusion with the host cell is most likely mediated by both E1 and E2, through conformational rearrangements of the heterodimer required for fusion rather than a classical class II fusion mechanism. E1/E2 heterodimer binds host apolipoproteins such as APOB and ApoE thereby forming a lipo-viro-particle (LVP). APOE associated to the LVP allows the initial virus attachment to cell surface receptors such as the heparan sulfate proteoglycans (HSPGs), syndecan-1 (SDC1), syndecan-1 (SDC2), the low-density lipoprotein receptor (LDLR) and scavenger receptor class B type I (SCARB1). The cholesterol transfer activity of SCARB1 allows E2 exposure and binding of E2 to SCARB1 and the tetraspanin CD81. E1/E2 heterodimer binding on CD81 activates the epithelial growth factor receptor (EGFR) signaling pathway. Diffusion of the complex E1-E2-EGFR-SCARB1-CD81 to the cell lateral membrane allows further interaction with Claudin 1 (CLDN1) and occludin (OCLN) to finally trigger HCV entry. Forms a heterodimer with envelope glycoprotein E1, which mediates virus attachment to the host cell, virion internalization through clathrin-dependent endocytosis and fusion with host membrane. Fusion with the host cell is most likely mediated by both E1 and E2, through conformational rearrangements of the heterodimer required for fusion rather than a classical class II fusion mechanism. The interaction between envelope glycoprotein E2 and host apolipoprotein E/APOE allows the proper assembly, maturation and infectivity of the viral particles. This interaction is probably promoted via the up-regulation of cellular autophagy by the virus. E1/E2 heterodimer binds host apolipoproteins such as APOB and APOE thereby forming a lipo-viro-particle (LVP). APOE associated to the LVP allows the initial virus attachment to cell surface receptors such as the heparan sulfate proteoglycans (HSPGs), syndecan-1 (SDC1), syndecan-1 (SDC2), the low-density lipoprotein receptor (LDLR) and scavenger receptor class B type I (SCARB1). The cholesterol transfer activity of SCARB1 allows E2 exposure and binding of E2 to SCARB1 and the tetraspanin CD81. E1/E2 heterodimer binding on CD81 activates the epithelial growth factor receptor (EGFR) signaling pathway. Diffusion of the complex E1-E2-EGFR-SCARB1-CD81 to the cell lateral membrane allows further interaction with Claudin 1 (CLDN1) and occludin (OCLN) to finally trigger HCV entry. Inhibits host EIF2AK2/PKR activation, preventing the establishment of an antiviral state. Viral ligand for CD209/DC-SIGN and CLEC4M/DC-SIGNR, which are respectively found on dendritic cells (DCs), and on liver sinusoidal endothelial cells and macrophage-like cells of lymph node sinuses. These interactions allow the capture of circulating HCV particles by these cells and subsequent facilitated transmission to permissive cells such as hepatocytes and lymphocyte subpopulations. The interaction between E2 and host amino acid transporter complex formed by SLC3A2 and SLC7A5/LAT1 may facilitate viral entry into host cell. In terms of biological role, ion channel protein that acts as a viroporin and plays an essential role in the assembly, envelopment and secretion of viral particles. Regulates the host cell secretory pathway, which induces the intracellular retention of viral glycoproteins and favors assembly of viral particles. Creates a pore in acidic organelles and releases Ca(2+) and H(+) in the cytoplasm of infected cells, leading to a productive viral infection. High levels of cytoplasmic Ca(2+) may trigger membrane trafficking and transport of viral ER-associated proteins to viroplasms, sites of viral genome replication. This ionic imbalance induces the assembly of the inflammasome complex, which triggers the maturation of pro-IL-1beta into IL-1beta through the action of caspase-1. Targets also host mitochondria and induces mitochondrial depolarization. In addition of its role as a viroporin, acts as a lipid raft adhesion factor. Functionally, cysteine protease required for the proteolytic auto-cleavage between the non-structural proteins NS2 and NS3. The N-terminus of NS3 is required for the function of NS2 protease (active region NS2-3). Promotes the initiation of viral particle assembly by mediating the interaction between structural and non-structural proteins. Its function is as follows. Displays three enzymatic activities: serine protease with a chymotrypsin-like fold, NTPase and RNA helicase. NS3 serine protease, in association with NS4A, is responsible for the cleavages of NS3-NS4A, NS4A-NS4B, NS4B-NS5A and NS5A-NS5B. The NS3/NS4A complex prevents phosphorylation of host IRF3, thus preventing the establishment of dsRNA induced antiviral state. The NS3/NS4A complex induces host amino acid transporter component SLC3A2, thus contributing to HCV propagation. NS3 RNA helicase binds to RNA and unwinds both dsDNA and dsRNA in the 3' to 5' direction, and likely resolves RNA complicated stable secondary structures in the template strand. Binds a single ATP and catalyzes the unzipping of a single base pair of dsRNA. Inhibits host antiviral proteins TBK1 and IRF3 thereby preventing the establishment of an antiviral state. Cleaves host MAVS/CARDIF thereby preventing the establishment of an antiviral state. Cleaves host TICAM1/TRIF, thereby disrupting TLR3 signaling and preventing the establishment of an antiviral state. Induces a specific membrane alteration that serves as a scaffold for the virus replication complex. This membrane alteration gives rise to the so-called ER-derived membranous web that contains the replication complex. NS4B self-interaction contributes to its function in membranous web formation. Promotes host TRIF protein degradation in a CASP8-dependent manner thereby inhibiting host TLR3-mediated interferon signaling. Disrupts the interaction between STING and TBK1 contributing to the inhibition of interferon signaling. In terms of biological role, phosphorylated protein that is indispensable for viral replication and assembly. Both hypo- and hyperphosphorylated states are required for the viral life cycle. The hyperphosphorylated form of NS5A is an inhibitor of viral replication. Involved in RNA-binding and especially in binding to the viral genome. Zinc is essential for RNA-binding. Participates in the viral particle production as a result of its interaction with the mature viral core protein. Its interaction with host VAPB may target the viral replication complex to vesicles. Down-regulates viral IRES translation initiation. Mediates interferon resistance, presumably by interacting with and inhibiting host EIF2AK2/PKR. Prevents BIN1-induced apoptosis. Acts as a transcriptional activator of some host genes important for viral replication when localized in the nucleus. Via the interaction with host PACSIN2, modulates lipid droplet formation in order to promote virion assembly. Modulates TNFRSF21/DR6 signaling pathway for viral propagation. Functionally, RNA-dependent RNA polymerase that performs primer-template recognition and RNA synthesis during viral replication. Initiates RNA transcription/replication at a flavin adenine dinucleotide (FAD), resulting in a 5'- FAD cap on viral RNAs. In this way, recognition of viral 5' RNA by host pattern recognition receptors can be bypassed, thereby evading activation of antiviral pathways. This is Genome polyprotein from Homo sapiens (Human).